We begin with the raw amino-acid sequence, 131 residues long: Large ribosomal subunit protein eL32 (131 aa).

This sequence belongs to the eukaryotic ribosomal protein eL32 family.

In Candida glabrata (strain ATCC 2001 / BCRC 20586 / JCM 3761 / NBRC 0622 / NRRL Y-65 / CBS 138) (Yeast), this protein is Large ribosomal subunit protein eL32 (RPL32).